A 202-amino-acid polypeptide reads, in one-letter code: Dephospho-CoA kinase (202 aa).

Positions 6 to 202 (KVSITGDLSS…EYFYALKGAL (197 aa)) constitute a DPCK domain. An ATP-binding site is contributed by 14–19 (SSGKTE).

The protein belongs to the CoaE family.

It localises to the cytoplasm. The catalysed reaction is 3'-dephospho-CoA + ATP = ADP + CoA + H(+). It participates in cofactor biosynthesis; coenzyme A biosynthesis; CoA from (R)-pantothenate: step 5/5. In terms of biological role, catalyzes the phosphorylation of the 3'-hydroxyl group of dephosphocoenzyme A to form coenzyme A. The polypeptide is Dephospho-CoA kinase (Chlamydia abortus (strain DSM 27085 / S26/3) (Chlamydophila abortus)).